A 73-amino-acid polypeptide reads, in one-letter code: Translational regulator CsrA (73 aa).

This sequence belongs to the CsrA/RsmA family. As to quaternary structure, homodimer; the beta-strands of each monomer intercalate to form a hydrophobic core, while the alpha-helices form wings that extend away from the core.

It is found in the cytoplasm. In terms of biological role, a translational regulator that binds mRNA to regulate translation initiation and/or mRNA stability. Usually binds in the 5'-UTR at or near the Shine-Dalgarno sequence preventing ribosome-binding, thus repressing translation. Its main target seems to be the major flagellin gene, while its function is anatagonized by FliW. This is Translational regulator CsrA from Clostridium kluyveri (strain NBRC 12016).